The sequence spans 255 residues: Probable transcriptional regulator ycf27 (255 aa).

In terms of domain architecture, Response regulatory spans 9-122; that stretch reads KILIADDESS…ELEARIRCVL (114 aa). Position 58 is a 4-aspartylphosphate (D58). The segment at residues 78–96 is a DNA-binding region (H-T-H motif); that stretch reads DIPIIMLTALGDVTDRITG. Residues 137–238 constitute a DNA-binding region (ompR/PhoB-type); that stretch reads SGIINIGFLK…SRGTGYLFQR (102 aa).

The protein resides in the plastid. The protein localises to the chloroplast. Its function is as follows. Probable promoter-specific protein mediating the interaction between DNA and RNA polymerase. The polypeptide is Probable transcriptional regulator ycf27 (ycf27) (Galdieria sulphuraria (Red alga)).